The chain runs to 190 residues: Putative hydrolase YdeN (190 aa).

Residues S71, D137, and H164 each act as charge relay system in the active site.

Belongs to the RBBP9 family.

In Bacillus subtilis (strain 168), this protein is Putative hydrolase YdeN (ydeN).